A 78-amino-acid polypeptide reads, in one-letter code: uncharacterized protein (78 aa).

The span at E56–E66 shows a compositional bias: basic and acidic residues. Positions E56 to D78 are disordered.

This is an uncharacterized protein from Saccharomyces cerevisiae (strain ATCC 204508 / S288c) (Baker's yeast).